Here is a 236-residue protein sequence, read N- to C-terminus: Protein YIPF6 (236 aa).

Ala-2 bears the N-acetylalanine mark. The Cytoplasmic segment spans residues 2-84 (AEAEESPGDP…HVLYPRKSNT (83 aa)). Ser-7 carries the phosphoserine modification. The helical transmembrane segment at 85–105 (LLRDWDLWGPLILCVTLALML) threads the bilayer. The Lumenal portion of the chain corresponds to 106 to 115 (QRDSADSEKD). A helical membrane pass occupies residues 116–136 (GGPQFAEVFVIVWFGAVTITL). The Cytoplasmic portion of the chain corresponds to 137–146 (NSKLLGGNIS). Residues 147-167 (FFQSLCVLGYCILPLTVAMLI) form a helical membrane-spanning segment. Residues 168-184 (CRLVLLADPGPVNFMVR) are Lumenal-facing. Residues 185–205 (LFVVIVMFAWSIVASTAFLAD) form a helical membrane-spanning segment. The Cytoplasmic portion of the chain corresponds to 206 to 212 (SQPPNRR). A helical transmembrane segment spans residues 213-233 (ALAVYPVFLFYFVISWMILTF). The Lumenal segment spans residues 234 to 236 (TPQ).

This sequence belongs to the YIP1 family. Predominantly interacts with YIPF1 or YIPF2, but may also form a ternary complex with YIPF1 and YIPF2. This interaction may stabilize YIPF1 and YIPF2.

It is found in the golgi apparatus membrane. Functionally, may be required for stable YIPF1 and YIPF2 protein expression. This is Protein YIPF6 (YIPF6) from Homo sapiens (Human).